A 291-amino-acid polypeptide reads, in one-letter code: uncharacterized protein (291 aa).

Positions 191–289 (KQMLNWIHLH…NMTPLSYKKM (99 aa)) constitute an HTH araC/xylS-type domain. DNA-binding regions (H-T-H motif) lie at residues 208-229 (EDIA…KRML) and 256-279 (VTEV…QQAM).

This is an uncharacterized protein from Bacillus subtilis (strain 168).